The primary structure comprises 529 residues: MQQRRPVRRALLSVSDKAGIVEFAQALSARGVELLSTGGTARLLAEKGLPVTEVSDYTGFPEMMDGRVKTLHPKVHGGILGRRGQDDAIMEEHQIQPIDMVVVNLYPFAQTVAREGCSLEDAVENIDIGGPTMVRSAAKNHKDVAIVVKSSDYDAIIKEIDANEGSLTLETRFDLAIKAFEHTAAYDSMIANYFGSMVPAYHGESKEAAGRFPRTLNLNFIKKQDMRYGENSHQQAAFYIEENVKEASVATATQVQGKALSYNNIADTDAALECVKEFAEPACVIVKHANPCGVAIGNSILDAYDRAYKTDPTSAFGGIIAFNRELDAETAQAIISRQFVEVIIAPSASEEALKITAAKQNVRVLTCGQWGERVPGLDFKRVNGGLLVQDRDLGMVGAEELRVVTKRQPTEQELRDALFCWKVAKFVKSNAIVYAKNNMTIGIGAGQMSRVYSAKIAGIKAADEGLEVKGSSMASDAFFPFRDGIDAAAAAGVTCVIQPGGSIRDDEVIAAADEHGIAMLFTDMRHFRH.

Residues 1–148 (MQQRRPVRRA…KNHKDVAIVV (148 aa)) enclose the MGS-like domain. Lys-287 carries the N6-acetyllysine modification.

Belongs to the PurH family.

The catalysed reaction is (6R)-10-formyltetrahydrofolate + 5-amino-1-(5-phospho-beta-D-ribosyl)imidazole-4-carboxamide = 5-formamido-1-(5-phospho-D-ribosyl)imidazole-4-carboxamide + (6S)-5,6,7,8-tetrahydrofolate. It carries out the reaction IMP + H2O = 5-formamido-1-(5-phospho-D-ribosyl)imidazole-4-carboxamide. It functions in the pathway purine metabolism; IMP biosynthesis via de novo pathway; 5-formamido-1-(5-phospho-D-ribosyl)imidazole-4-carboxamide from 5-amino-1-(5-phospho-D-ribosyl)imidazole-4-carboxamide (10-formyl THF route): step 1/1. It participates in purine metabolism; IMP biosynthesis via de novo pathway; IMP from 5-formamido-1-(5-phospho-D-ribosyl)imidazole-4-carboxamide: step 1/1. This is Bifunctional purine biosynthesis protein PurH from Escherichia coli O7:K1 (strain IAI39 / ExPEC).